The following is a 120-amino-acid chain: Large ribosomal subunit protein uL18 (120 aa).

Belongs to the universal ribosomal protein uL18 family. Part of the 50S ribosomal subunit; part of the 5S rRNA/L5/L18/L25 subcomplex. Contacts the 5S and 23S rRNAs.

This is one of the proteins that bind and probably mediate the attachment of the 5S RNA into the large ribosomal subunit, where it forms part of the central protuberance. In Nitrobacter winogradskyi (strain ATCC 25391 / DSM 10237 / CIP 104748 / NCIMB 11846 / Nb-255), this protein is Large ribosomal subunit protein uL18.